The chain runs to 406 residues: MGIDDYLSKIRALTLNHKRVSTITLSETYFNRDEVYGKLMNYYDEVFLLQTCNRVEVYVYGDDDSVAEDMYKVKGTINHVDKLVGMNAVRHIFRVAAGLESAAVGESEILGQVEDAFNDARKRGALGGLLGFTIERAIRTGKEIRSRFPEISIGLASIGSLVAEYVHRVRGLNSRIAVIGAGSIGSDIVRRLAEKGFRNVIIVNRTLDKAKAAALRYGFNYAPIDSLRSVIRDSDVVIFATSATNPLLRRRDAEELSGKPIIIDVGVPRNVDPEIPGVVSIDELKNIENEIREGKRKALDEASRLIELRLIEYRRLFARRVIEGMIGELTKWGLSIGESEVKRAVKAGLIKNEEDGAALAVKSTVKKIMLPLLTYLKELAEEDKFDEALIIISGIKAKLNGDGKQS.

Substrate is bound by residues 51–54 (TCNR), Ser101, 106–108 (ESE), and Gln112. Cys52 acts as the Nucleophile in catalysis. 180–185 (GAGSIG) contacts NADP(+).

Belongs to the glutamyl-tRNA reductase family. In terms of assembly, homodimer.

It carries out the reaction (S)-4-amino-5-oxopentanoate + tRNA(Glu) + NADP(+) = L-glutamyl-tRNA(Glu) + NADPH + H(+). It functions in the pathway porphyrin-containing compound metabolism; protoporphyrin-IX biosynthesis; 5-aminolevulinate from L-glutamyl-tRNA(Glu): step 1/2. Catalyzes the NADPH-dependent reduction of glutamyl-tRNA(Glu) to glutamate 1-semialdehyde (GSA). This Caldivirga maquilingensis (strain ATCC 700844 / DSM 13496 / JCM 10307 / IC-167) protein is Glutamyl-tRNA reductase.